A 241-amino-acid polypeptide reads, in one-letter code: Phosphoadenosine 5'-phosphosulfate reductase (241 aa).

C235 serves as the catalytic Nucleophile; cysteine thiosulfonate intermediate.

Belongs to the PAPS reductase family. CysH subfamily.

The protein localises to the cytoplasm. The enzyme catalyses [thioredoxin]-disulfide + sulfite + adenosine 3',5'-bisphosphate + 2 H(+) = [thioredoxin]-dithiol + 3'-phosphoadenylyl sulfate. Its pathway is sulfur metabolism; hydrogen sulfide biosynthesis; sulfite from sulfate: step 3/3. Catalyzes the formation of sulfite from phosphoadenosine 5'-phosphosulfate (PAPS) using thioredoxin as an electron donor. The polypeptide is Phosphoadenosine 5'-phosphosulfate reductase (Xanthomonas campestris pv. campestris (strain 8004)).